Reading from the N-terminus, the 82-residue chain is ATP synthase subunit 9, mitochondrial (82 aa).

The next 2 helical transmembrane spans lie at 8-28 and 45-67; these read IGAG…GNVF and SFGY…PMMA.

Belongs to the ATPase C chain family. F-type ATPases have 2 components, CF(1) - the catalytic core - and CF(0) - the membrane proton channel. CF(1) has five subunits: alpha(3), beta(3), gamma(1), delta(1), epsilon(1). CF(0) has three main subunits: a, b and c.

The protein localises to the mitochondrion membrane. Its function is as follows. This protein is one of the chains of the nonenzymatic membrane component (F0) of mitochondrial ATPase. This chain is ATP synthase subunit 9, mitochondrial (ATP9), found in Malus domestica (Apple).